The chain runs to 486 residues: Keratin, type II cuticular Hb6 (486 aa).

A head region spans residues 1-106; it reads MTCGSYCGGR…PNAQCVKHEE (106 aa). The 312-residue stretch at 106–417 folds into the IF rod domain; sequence EKEQIKCLNS…RLLEGEEQRL (312 aa). The coil 1A stretch occupies residues 107-141; the sequence is KEQIKCLNSKFAAFIDKVRFLEQQNKLLETKWQFY. The segment at 142 to 151 is linker 1; the sequence is QNRKCCESNM. The coil 1B stretch occupies residues 152 to 252; sequence EPLFEGYIEA…YDEETRILHS (101 aa). Lys-212 participates in a covalent cross-link: Glycyl lysine isopeptide (Lys-Gly) (interchain with G-Cter in SUMO1). The segment at 253–269 is linker 12; that stretch reads HISDTSIVVKMDNSRDL. A coil 2 region spans residues 270 to 413; that stretch reads NMDCVVAEIK…TTYRRLLEGE (144 aa). Residues 414–486 are tail; that stretch reads EQRLCEGVGS…GACSGGCKKC (73 aa).

This sequence belongs to the intermediate filament family. As to quaternary structure, heterotetramer of two type I and two type II keratins.

This chain is Keratin, type II cuticular Hb6 (Krt86), found in Mus musculus (Mouse).